Here is a 45-residue protein sequence, read N- to C-terminus: Cytochrome c6 (45 aa).

Heme c-binding residues include C12, C15, and H16.

This sequence belongs to the cytochrome c family. PetJ subfamily. In terms of assembly, monomer. In terms of processing, binds 1 heme c group covalently per subunit.

It is found in the cellular thylakoid lumen. Its function is as follows. Functions as an electron carrier between membrane-bound cytochrome b6-f and photosystem I in oxygenic photosynthesis. The chain is Cytochrome c6 (petJ) from Prochlorothrix hollandica.